The following is a 447-amino-acid chain: Probable protein phosphatase 2C 71 (447 aa).

In terms of domain architecture, PPM-type phosphatase spans 33–279; sequence SYGYASSAGK…DNITCVVVRF (247 aa). Mn(2+) is bound by residues Asp-69, Gly-70, Asp-231, and Asp-270. The segment covering 284–297 has biased composition (low complexity); that stretch reads SANNNGSSSSEEAN. Residues 284–447 form a disordered region; it reads SANNNGSSSS…ARKTTPSIFN (164 aa). A compositionally biased stretch (basic and acidic residues) spans 305–331; it reads NDSDHKISAKETNQDHTTVNKDLDRNT. Polar residues-rich tracts occupy residues 346–374 and 392–423; these read ADNSNQKPIATTATGHSVSSEQSGLTGEK and KVPNQTQSTVHNDLDSSTAKKPAATEQSGSTG. A compositionally biased stretch (basic and acidic residues) spans 424–438; it reads ERNRKPIKVHSDSAA.

Belongs to the PP2C family. Requires Mg(2+) as cofactor. Mn(2+) serves as cofactor.

It catalyses the reaction O-phospho-L-seryl-[protein] + H2O = L-seryl-[protein] + phosphate. The enzyme catalyses O-phospho-L-threonyl-[protein] + H2O = L-threonyl-[protein] + phosphate. The chain is Probable protein phosphatase 2C 71 from Arabidopsis thaliana (Mouse-ear cress).